Reading from the N-terminus, the 916-residue chain is Protein prickle (916 aa).

Disordered regions lie at residues 49 to 105 and 127 to 176; these read PLSP…AGGS and QHLQ…IPVD. A compositionally biased stretch (low complexity) spans 145–156; it reads SSPSPALSSSIT. Gly residues predominate over residues 157-171; sequence TGGGGVTRGGGGGGH. The PET domain maps to 167 to 275; that stretch reads GGGGHIIPVD…TVKQLATNQI (109 aa). LIM zinc-binding domains follow at residues 274 to 338, 339 to 399, and 400 to 462; these read QICD…ETLK, PRCS…MFAE, and YCDF…GEPP. Disordered stretches follow at residues 460-593, 635-671, 692-725, and 763-870; these read EPPT…PNHR, VIPG…QPQS, DAIQ…ENLP, and RSKS…DTVY. Composition is skewed to polar residues over residues 507-517, 526-569, and 642-654; these read SPISERSTPHS, EMST…SRTL, and AKTN…SMPE. Residues 655 to 671 show a composition bias toward low complexity; the sequence is LSQSLQQQQQQQQQPQS. Positions 777-793 are enriched in basic residues; that stretch reads RSSKSKRRSSHHHQHHR. Positions 796-805 are enriched in low complexity; sequence GESSSYSGTS. A compositionally biased stretch (basic and acidic residues) spans 829–844; the sequence is VPDVEFIEHQDHHRGD. Residues 852–867 are compositionally biased toward low complexity; it reads RSVCSTCSSSSSSADD.

Belongs to the prickle / espinas / testin family. Interacts with dsh; PET and LIM domains interact with dsh DEP domain, in wing cells. Interacts with Vang in photoreceptor cells.

The protein localises to the cell membrane. Functionally, acts in a planar cell polarity (PCP) complex; polarization along the apical/basal axis of epithelial cells. PCP signaling in the wing disk requires the receptor fz and the cytoplasmic proteins dsh and pk. These act in a feedback loop leading to activation of the jnk cascade and subsequent polarized arrangement of hairs and bristles. Dgo and pk compete with one another for dsh binding, thereby modulating fz dsh activity and ensuring tight control over fz PCP signaling. Vang, stan and pk function together to regulate the establishment of tissue polarity in the adult eye. This is Protein prickle from Aedes aegypti (Yellowfever mosquito).